The sequence spans 90 residues: Potassium channel toxin BmTXK-beta (90 aa).

Positions 1–22 (MMKQQFFLFLAVIVMISSVIEA) are cleaved as a signal peptide. Positions 23–29 (GRGKEIM) are excised as a propeptide. Residues 55-90 (EYACPVIEKWCEDHCAAKKAIGKCEDTECKCLKLRK) enclose the BetaSPN-type CS-alpha/beta domain. Cystine bridges form between Cys58-Cys78, Cys65-Cys83, and Cys69-Cys85.

This sequence belongs to the long chain scorpion toxin family. Class 2 subfamily. As to expression, expressed by the venom gland.

The protein resides in the secreted. This recombinant peptide reversibly and dose-dependently inhibits the transient outward potassium current (I(To)) of rabbit atrial myocyte and prolongs the action potential duration of rabbit atrial myocyte without affecting the action potential amplitude. Thus, the voltage-gated potassium channels Kv4.1/KCND1, Kv4.2/KCND2, Kv4.3/KCND3 may be the target of this toxin. This chain is Potassium channel toxin BmTXK-beta, found in Olivierus martensii (Manchurian scorpion).